Consider the following 142-residue polypeptide: MKTYSAKPAEVQRDWYLVDATDKTLGRLASEVAHRLRGKHKPVFTPHVDAGDYIVVINADKIRLTGRKERDKQYFWHTGFPGGIKSRSVAEVRERHPERLIESAVRGMMPKNRLGRAMLKKLKVYAGNEHRHHAQQPQPLEL.

This sequence belongs to the universal ribosomal protein uL13 family. As to quaternary structure, part of the 50S ribosomal subunit.

In terms of biological role, this protein is one of the early assembly proteins of the 50S ribosomal subunit, although it is not seen to bind rRNA by itself. It is important during the early stages of 50S assembly. The sequence is that of Large ribosomal subunit protein uL13 from Halorhodospira halophila (strain DSM 244 / SL1) (Ectothiorhodospira halophila (strain DSM 244 / SL1)).